We begin with the raw amino-acid sequence, 72 residues long: NAD(P)H-quinone oxidoreductase subunit O (72 aa).

It belongs to the complex I NdhO subunit family. NDH-1 can be composed of about 15 different subunits; different subcomplexes with different compositions have been identified which probably have different functions.

Its subcellular location is the cellular thylakoid membrane. The enzyme catalyses a plastoquinone + NADH + (n+1) H(+)(in) = a plastoquinol + NAD(+) + n H(+)(out). It carries out the reaction a plastoquinone + NADPH + (n+1) H(+)(in) = a plastoquinol + NADP(+) + n H(+)(out). Functionally, NDH-1 shuttles electrons from an unknown electron donor, via FMN and iron-sulfur (Fe-S) centers, to quinones in the respiratory and/or the photosynthetic chain. The immediate electron acceptor for the enzyme in this species is believed to be plastoquinone. Couples the redox reaction to proton translocation, and thus conserves the redox energy in a proton gradient. Cyanobacterial NDH-1 also plays a role in inorganic carbon-concentration. This chain is NAD(P)H-quinone oxidoreductase subunit O, found in Synechococcus sp. (strain JA-3-3Ab) (Cyanobacteria bacterium Yellowstone A-Prime).